Consider the following 815-residue polypeptide: Probable beta-glucosidase G (815 aa).

An N-terminal signal peptide occupies residues 1–20; that stretch reads MASIAHLVVSGLLAATAVNG. 4 N-linked (GlcNAc...) asparagine glycosylation sites follow: Asn40, Asn58, Asn229, and Asn276. Residue Asp304 is part of the active site. 9 N-linked (GlcNAc...) asparagine glycosylation sites follow: Asn343, Asn350, Asn402, Asn507, Asn563, Asn584, Asn623, Asn662, and Asn715.

Belongs to the glycosyl hydrolase 3 family.

Its subcellular location is the secreted. It catalyses the reaction Hydrolysis of terminal, non-reducing beta-D-glucosyl residues with release of beta-D-glucose.. It functions in the pathway glycan metabolism; cellulose degradation. Beta-glucosidases are one of a number of cellulolytic enzymes involved in the degradation of cellulosic biomass. Catalyzes the last step releasing glucose from the inhibitory cellobiose. The chain is Probable beta-glucosidase G (bglG) from Aspergillus flavus (strain ATCC 200026 / FGSC A1120 / IAM 13836 / NRRL 3357 / JCM 12722 / SRRC 167).